The sequence spans 186 residues: MASTNDLKNGLVLDLDGQLWTVVEFQHVKPGKGPAFVRTKLKHVLSGKTVDKTFNAGIKVDTATVDKRDMQYLYKDGDDFVFMDSSDYEQFHVGPQIVGDAANFMLENTEVIVALHEGNPLYVELPTSVVLEITYTEPGLQGDRSSAGTKAATVETGYQIQVPLFLEIGTKVKVDTRSGDYLGRVN.

The protein belongs to the elongation factor P family.

The protein resides in the cytoplasm. It participates in protein biosynthesis; polypeptide chain elongation. Functionally, involved in peptide bond synthesis. Stimulates efficient translation and peptide-bond synthesis on native or reconstituted 70S ribosomes in vitro. Probably functions indirectly by altering the affinity of the ribosome for aminoacyl-tRNA, thus increasing their reactivity as acceptors for peptidyl transferase. The protein is Elongation factor P of Beutenbergia cavernae (strain ATCC BAA-8 / DSM 12333 / CCUG 43141 / JCM 11478 / NBRC 16432 / NCIMB 13614 / HKI 0122).